The following is a 184-amino-acid chain: Large ribosomal subunit protein uL22 (184 aa).

It belongs to the universal ribosomal protein uL22 family. As to quaternary structure, part of the 50S ribosomal subunit.

In terms of biological role, this protein binds specifically to 23S rRNA. It makes multiple contacts with different domains of the 23S rRNA in the assembled 50S subunit and ribosome. The globular domain of the protein is located near the polypeptide exit tunnel on the outside of the subunit, while an extended beta-hairpin is found that lines the wall of the exit tunnel in the center of the 70S ribosome. In Pyrobaculum calidifontis (strain DSM 21063 / JCM 11548 / VA1), this protein is Large ribosomal subunit protein uL22.